The chain runs to 131 residues: Riboflavin kinase (131 aa).

Residue 11–16 (GLQKAG) coordinates CDP. Mg(2+) is bound by residues Thr40 and Asn42. FMN-binding residues include Thr98 and Glu106. Residue 111–114 (EKLR) coordinates CDP.

Belongs to the archaeal riboflavin kinase family. Requires Mg(2+) as cofactor.

The enzyme catalyses riboflavin + CTP = CDP + FMN + H(+). It functions in the pathway cofactor biosynthesis; FMN biosynthesis; FMN from riboflavin (CTP route): step 1/1. Catalyzes the CTP-dependent phosphorylation of riboflavin (vitamin B2) to form flavin mononucleotide (FMN). In Methanosphaera stadtmanae (strain ATCC 43021 / DSM 3091 / JCM 11832 / MCB-3), this protein is Riboflavin kinase.